A 406-amino-acid polypeptide reads, in one-letter code: Acetate kinase (406 aa).

Asn10 provides a ligand contact to Mg(2+). Residue Lys17 participates in ATP binding. Substrate is bound at residue Arg92. The active-site Proton donor/acceptor is the Asp151. ATP contacts are provided by residues 211–215, 286–288, and 335–339; these read HLGSG, DFR, and GIGEN. Residue Glu389 participates in Mg(2+) binding.

Belongs to the acetokinase family. As to quaternary structure, homodimer. It depends on Mg(2+) as a cofactor. Requires Mn(2+) as cofactor.

Its subcellular location is the cytoplasm. It carries out the reaction acetate + ATP = acetyl phosphate + ADP. The protein operates within metabolic intermediate biosynthesis; acetyl-CoA biosynthesis; acetyl-CoA from acetate: step 1/2. Its function is as follows. Catalyzes the formation of acetyl phosphate from acetate and ATP. Can also catalyze the reverse reaction. The protein is Acetate kinase of Buchnera aphidicola subsp. Cinara cedri (strain Cc).